The primary structure comprises 291 residues: MSALQLTPQAASLAERLADLAVDALIAEADLSPKPALVDRRGSGAHTDLHLGLMHSSALSLWPTFKLMADAAGQFNTVGQPLREALGRLGRDGEATMLRTTQGVNTHRGAIWALGLLVTAAALDARNCAPEAVLARAASLAQIKDRQVLVQGSHGNEVVRRYGVMGAREQAQQGFPAVRDFALPQLQRSRAAGSGEQNARLDALLAIMTTLSDTCVLHRAGIEGLHTMQRGAQHVLDVGGSASLAGRRALNQLDQQLLALNASPGGAADLLAACLFIDGLEPALGRVSRSV.

Belongs to the CitG/MdcB family.

The enzyme catalyses 3'-dephospho-CoA + ATP = 2'-(5''-triphospho-alpha-D-ribosyl)-3'-dephospho-CoA + adenine. Functionally, involved in the formation of 2-(5''-phosphoribosyl)-3'-dephosphocoenzyme-A, the prosthetic group of the acyl-carrier protein of the malonate decarboxylase. The sequence is that of Probable 2-(5''-triphosphoribosyl)-3'-dephosphocoenzyme-A synthase from Pseudomonas savastanoi pv. phaseolicola (strain 1448A / Race 6) (Pseudomonas syringae pv. phaseolicola (strain 1448A / Race 6)).